We begin with the raw amino-acid sequence, 370 residues long: Probable G-protein coupled receptor 85 (370 aa).

Residues 1 to 25 (MANYSHAADNILQNLSPLTAFLKLT) are Extracellular-facing. The N-linked (GlcNAc...) asparagine glycan is linked to N3. Residues 26-46 (SLGFIIGVSVVGNLLISILLA) traverse the membrane as a helical segment. Over 47–57 (KDKTLHRAPYY) the chain is Cytoplasmic. The helical transmembrane segment at 58-78 (FLLDLCCSDILRSAICFPFVF) threads the bilayer. At 79 to 96 (NSVKNGSTWTYGTLTCKV) the chain is on the extracellular side. The N-linked (GlcNAc...) asparagine glycan is linked to N83. C94 and C172 form a disulfide bridge. A helical membrane pass occupies residues 97–117 (IAFLGVLSCFHTAFMLFCISV). At 118–137 (TRYLAIAHHRFYTKRLTFWT) the chain is on the cytoplasmic side. A helical membrane pass occupies residues 138–158 (CLAVICMVWTLSVAMAFPPVL). Over 159–188 (DVGTYSFIREEDQCTFQHRSFRANDSLGFM) the chain is Extracellular. N182 carries N-linked (GlcNAc...) asparagine glycosylation. The helical transmembrane segment at 189-209 (LLLALILLATQLVYLKLIFFV) threads the bilayer. Residues 210 to 286 (HDRRKMKPVQ…FKMEKRISRM (77 aa)) lie on the Cytoplasmic side of the membrane. Residues 287-307 (FYIMTFLFLTLWGPYLVACYW) form a helical membrane-spanning segment. Residues 308-313 (RVFARG) lie on the Extracellular side of the membrane. A helical membrane pass occupies residues 314–334 (PVVPGGFLTAAVWMSFAQAGI). Residues 335-370 (NPFVCIFSNRELRRCFSTTLLYCRKSRLPREPYCVI) are Cytoplasmic-facing.

The protein belongs to the G-protein coupled receptor 1 family. As to quaternary structure, interacts with DLG4 and DLG3.

It localises to the cell membrane. It is found in the endoplasmic reticulum. Its function is as follows. Orphan receptor. The protein is Probable G-protein coupled receptor 85 (GPR85) of Pongo abelii (Sumatran orangutan).